The following is a 221-amino-acid chain: MEEPRPSKRLRSMAPNQASGGPPPEPGCCVADPEGSVEADGPAQPAQPAKPIAYVKPFRRQPPARPESPPPAERGRRRGGSRRPGRGRGRRAGPRGDAGQRQGAEGLMAPDVHIQLDHHGEPGHQGEPEITETAAFSLSETGPPPGTVQEGPGPDVAQPELGFQEPPAAPGPQAVDWQPVLTLYPCIGFRALGDSAVLQVIQTPQGTYVQGVPVFLTDIAY.

Disordered regions lie at residues 1–103 and 137–174; these read MEEP…QRQG and SLSE…GPQA. Positions 42–53 are enriched in low complexity; sequence PAQPAQPAKPIA. The span at 63-72 shows a compositional bias: pro residues; the sequence is PARPESPPPA. Residues 75–93 show a composition bias toward basic residues; that stretch reads GRRRGGSRRPGRGRGRRAG.

This sequence belongs to the PRR20 family.

The chain is Proline-rich protein 20A (PRR20A) from Homo sapiens (Human).